The primary structure comprises 525 residues: Light-independent protochlorophyllide reductase subunit B (525 aa).

Aspartate 36 lines the [4Fe-4S] cluster pocket. The Proton donor role is filled by aspartate 286. A substrate-binding site is contributed by 421 to 422 (GL).

Belongs to the ChlB/BchB/BchZ family. As to quaternary structure, protochlorophyllide reductase is composed of three subunits; ChlL, ChlN and ChlB. Forms a heterotetramer of two ChlB and two ChlN subunits. [4Fe-4S] cluster is required as a cofactor.

The catalysed reaction is chlorophyllide a + oxidized 2[4Fe-4S]-[ferredoxin] + 2 ADP + 2 phosphate = protochlorophyllide a + reduced 2[4Fe-4S]-[ferredoxin] + 2 ATP + 2 H2O. It functions in the pathway porphyrin-containing compound metabolism; chlorophyll biosynthesis (light-independent). In terms of biological role, component of the dark-operative protochlorophyllide reductase (DPOR) that uses Mg-ATP and reduced ferredoxin to reduce ring D of protochlorophyllide (Pchlide) to form chlorophyllide a (Chlide). This reaction is light-independent. The NB-protein (ChlN-ChlB) is the catalytic component of the complex. The sequence is that of Light-independent protochlorophyllide reductase subunit B from Prochlorococcus marinus (strain NATL1A).